Here is a 400-residue protein sequence, read N- to C-terminus: Enoyl-[acyl-carrier-protein] reductase [NADH] (400 aa).

NAD(+) is bound by residues 48-53 (GASTGY), 74-75 (FE), 111-112 (DA), and 139-140 (LA). A substrate-binding site is contributed by Y225. Catalysis depends on Y235, which acts as the Proton donor. Residues K244 and 273 to 275 (VVT) contribute to the NAD(+) site.

This sequence belongs to the TER reductase family. In terms of assembly, monomer.

The catalysed reaction is a 2,3-saturated acyl-[ACP] + NAD(+) = a (2E)-enoyl-[ACP] + NADH + H(+). The protein operates within lipid metabolism; fatty acid biosynthesis. Involved in the final reduction of the elongation cycle of fatty acid synthesis (FAS II). Catalyzes the reduction of a carbon-carbon double bond in an enoyl moiety that is covalently linked to an acyl carrier protein (ACP). In Burkholderia vietnamiensis (strain G4 / LMG 22486) (Burkholderia cepacia (strain R1808)), this protein is Enoyl-[acyl-carrier-protein] reductase [NADH].